A 477-amino-acid polypeptide reads, in one-letter code: MNNDKEINSEKSKRAINHFSNKKEIKNSDRRGILFSKLPSQQLNPDRYDNLMTFWNNSLIDISKSCNILIFTPKLLSTYFTVENVSPIYLPLILNEMIKTKFIVKYEEYIKDYGWSKWVWTKMVVQPFQYYTGLSTPNTETEKNVKFILPEMIKDKAEQLYQHQLKNMNSTTDNIISYINLEKSIKDWYITREELDLLLLVLFRDSKVLILTNNKIKNINNNNNGEDRIGIKFAFDGEKVQPIQETDFGILKLQTTYETLKQQESKLLTDIEEISNTIKESIRIKQKNHALLQLKKKKLLESILEKRATASTNIHEILFSIESAKSNQQIIESLCTGVSTLKKVNQEISVDQVDSILDDYQDAITNQREIDDAMKSGFNSVESLSSADIDEDQLEKELDQMLQDHLTLEKEEKQKQKQIEKEKQQQQQPPTSQFNPNLPIPLKNEEDELLKELESLSVTSNPLPKQDENKQKTSELI.

Coiled coils occupy residues 252 to 280 and 382 to 428; these read KLQTTYETLKQQESKLLTDIEEISNTIKE and ESLS…QQQQ. Composition is skewed to basic and acidic residues over residues 411–424 and 465–477; these read EEKQKQKQIEKEKQ and KQDENKQKTSELI. The interval 411–477 is disordered; that stretch reads EEKQKQKQIE…ENKQKTSELI (67 aa).

Belongs to the SNF7 family.

Its subcellular location is the cytoplasm. Functionally, plays a role in the endosomal sorting pathway. This chain is Charged multivesicular body protein 7 (chmp7), found in Dictyostelium discoideum (Social amoeba).